A 541-amino-acid chain; its full sequence is Threonine--tRNA ligase catalytic subunit (541 aa).

Residues 135–429 (DHRIIGERMD…LLEHFRGKLP (295 aa)) form a catalytic region. Residues C227, H278, and H406 each coordinate Zn(2+).

This sequence belongs to the class-II aminoacyl-tRNA synthetase family. Homodimer. Probably interacts with its editing subunit. It depends on Zn(2+) as a cofactor.

It is found in the cytoplasm. It carries out the reaction tRNA(Thr) + L-threonine + ATP = L-threonyl-tRNA(Thr) + AMP + diphosphate + H(+). Its function is as follows. Catalyzes the attachment of threonine to tRNA(Thr) in a two-step reaction: L-threonine is first activated by ATP to form Thr-AMP and then transferred to the acceptor end of tRNA(Thr). Also activates L-serine and transfers it to tRNA(Thr) but cannot deacylate incorrectly charged amino acid; unlike most archaea the editing function is found in a freestanding protein. This chain is Threonine--tRNA ligase catalytic subunit, found in Metallosphaera sedula (strain ATCC 51363 / DSM 5348 / JCM 9185 / NBRC 15509 / TH2).